The sequence spans 347 residues: Dihydroorotate dehydrogenase (quinone) (347 aa).

FMN-binding positions include 61–65 (AGLDK) and threonine 85. Lysine 65 contacts substrate. 110–114 (NRMGF) lines the substrate pocket. Residues asparagine 138 and asparagine 171 each coordinate FMN. Residue asparagine 171 coordinates substrate. Serine 174 serves as the catalytic Nucleophile. Asparagine 176 is a binding site for substrate. FMN-binding residues include lysine 216 and threonine 244. 245–246 (NT) serves as a coordination point for substrate. FMN contacts are provided by residues glycine 267, glycine 296, and 317 to 318 (YT).

It belongs to the dihydroorotate dehydrogenase family. Type 2 subfamily. Monomer. FMN is required as a cofactor.

It localises to the cell membrane. The enzyme catalyses (S)-dihydroorotate + a quinone = orotate + a quinol. It participates in pyrimidine metabolism; UMP biosynthesis via de novo pathway; orotate from (S)-dihydroorotate (quinone route): step 1/1. Functionally, catalyzes the conversion of dihydroorotate to orotate with quinone as electron acceptor. This chain is Dihydroorotate dehydrogenase (quinone), found in Azotobacter vinelandii (strain DJ / ATCC BAA-1303).